We begin with the raw amino-acid sequence, 209 residues long: Uracil phosphoribosyltransferase (209 aa).

Residues R79, R104, and 131–139 (DPMLATGGS) contribute to the 5-phospho-alpha-D-ribose 1-diphosphate site. Uracil-binding positions include I194 and 199 to 201 (GDA). D200 is a binding site for 5-phospho-alpha-D-ribose 1-diphosphate.

Belongs to the UPRTase family. It depends on Mg(2+) as a cofactor.

The enzyme catalyses UMP + diphosphate = 5-phospho-alpha-D-ribose 1-diphosphate + uracil. Its pathway is pyrimidine metabolism; UMP biosynthesis via salvage pathway; UMP from uracil: step 1/1. Its activity is regulated as follows. Allosterically activated by GTP. Functionally, catalyzes the conversion of uracil and 5-phospho-alpha-D-ribose 1-diphosphate (PRPP) to UMP and diphosphate. The polypeptide is Uracil phosphoribosyltransferase (Streptococcus agalactiae serotype III (strain NEM316)).